The following is a 339-amino-acid chain: Dihydroorotate dehydrogenase (quinone) (339 aa).

Residues 62–66 (AGMDK) and threonine 86 contribute to the FMN site. Lysine 66 contributes to the substrate binding site. 111–115 (NRMGF) is a binding site for substrate. Asparagine 139 and asparagine 172 together coordinate FMN. Residue asparagine 172 coordinates substrate. Catalysis depends on serine 175, which acts as the Nucleophile. Asparagine 177 lines the substrate pocket. Residues lysine 217 and threonine 245 each contribute to the FMN site. 246-247 (NT) is a binding site for substrate. Residues glycine 268, glycine 297, and 318–319 (YS) each bind FMN.

It belongs to the dihydroorotate dehydrogenase family. Type 2 subfamily. Monomer. FMN serves as cofactor.

The protein resides in the cell membrane. It carries out the reaction (S)-dihydroorotate + a quinone = orotate + a quinol. The protein operates within pyrimidine metabolism; UMP biosynthesis via de novo pathway; orotate from (S)-dihydroorotate (quinone route): step 1/1. Its function is as follows. Catalyzes the conversion of dihydroorotate to orotate with quinone as electron acceptor. The chain is Dihydroorotate dehydrogenase (quinone) from Shewanella baltica (strain OS155 / ATCC BAA-1091).